The chain runs to 198 residues: Pyridoxal 5'-phosphate synthase subunit PdxT (198 aa).

An L-glutamine-binding site is contributed by 52–54 (GES). Cys84 functions as the Nucleophile in the catalytic mechanism. L-glutamine is bound by residues Arg115 and 143–144 (IR). Active-site charge relay system residues include His179 and Glu181.

The protein belongs to the glutaminase PdxT/SNO family. In the presence of PdxS, forms a dodecamer of heterodimers. Only shows activity in the heterodimer.

It carries out the reaction aldehydo-D-ribose 5-phosphate + D-glyceraldehyde 3-phosphate + L-glutamine = pyridoxal 5'-phosphate + L-glutamate + phosphate + 3 H2O + H(+). It catalyses the reaction L-glutamine + H2O = L-glutamate + NH4(+). It participates in cofactor biosynthesis; pyridoxal 5'-phosphate biosynthesis. In terms of biological role, catalyzes the hydrolysis of glutamine to glutamate and ammonia as part of the biosynthesis of pyridoxal 5'-phosphate. The resulting ammonia molecule is channeled to the active site of PdxS. This Methanococcoides burtonii (strain DSM 6242 / NBRC 107633 / OCM 468 / ACE-M) protein is Pyridoxal 5'-phosphate synthase subunit PdxT.